Reading from the N-terminus, the 489-residue chain is Probable cytochrome P450 CYP44 (489 aa).

The tract at residues 12-31 (VEKCPYSPTSSPNTPPRTFS) is disordered. Residues 16–29 (PYSPTSSPNTPPRT) are compositionally biased toward low complexity. Cys438 lines the heme pocket.

It belongs to the cytochrome P450 family. Heme serves as cofactor.

In terms of biological role, cytochromes P450 are a group of heme-thiolate monooxygenases. They oxidize a variety of structurally unrelated compounds, including steroids, fatty acids, and xenobiotics. The protein is Probable cytochrome P450 CYP44 (cyp-44A1) of Caenorhabditis elegans.